We begin with the raw amino-acid sequence, 1232 residues long: DNA-directed RNA polymerase subunit beta (1232 aa).

A disordered region spans residues 1170-1232 (SVDEDADELE…LDLDDFGDEH (63 aa)). Positions 1171 to 1180 (VDEDADELEV) are enriched in acidic residues. The segment covering 1189 to 1198 (PEEKEEKEKE) has biased composition (basic and acidic residues). Positions 1199 to 1232 (DSDEYDDLREEDVEPDLEELSLDDLDLDDFGDEH) are enriched in acidic residues.

This sequence belongs to the RNA polymerase beta chain family. The RNAP catalytic core consists of 2 alpha, 1 beta, 1 beta' and 1 omega subunit. When a sigma factor is associated with the core the holoenzyme is formed, which can initiate transcription.

The catalysed reaction is RNA(n) + a ribonucleoside 5'-triphosphate = RNA(n+1) + diphosphate. DNA-dependent RNA polymerase catalyzes the transcription of DNA into RNA using the four ribonucleoside triphosphates as substrates. The protein is DNA-directed RNA polymerase subunit beta of Clostridium botulinum (strain Kyoto / Type A2).